Consider the following 507-residue polypeptide: MEWNTFFLVILIIIIKSTTPQITQRPPVENISTYHADWDTPLYTHPSNCRDDSFVPIRPAQLRCPHEFEDINKGLVSVPTRIIHLPLSVTSVSAVASGHYLHRVTYRVTCSTSFFGGQTIEKTILEAKLSRQEATDEASKDHEYPFFPEPSCIWMKNNVHKDITHYYKTPKTVSVDLYSRKFLNPDFIEGVCTTSPCQTHWQGVYWVGATPKAHCPTSETLEGHLFTRTHDHRVVKAIVAGHHPWGLTMACTVTFCGTEWIKTDLGDLIQVTGPGGTRKLTPNKCVNTDIQMRGATDDFSYLNHLITNMAQRTECLDAHSDITASGKVSSFLLSKFRPSHPGPGKAHYLLDGQIMRGDCDYEAVVSINYNRAQYKTMNNTWKSWKRVDNNTDGYDGMIFGDKLIIPDIEKYQSVYDSGMLVQRNLVEVPHLSIVFVSNTSDLSTNHIHTNLIPSDWSFNWSLWPSLSGMGVVGGAFLLLVLCCCCKASPPIPNYGIPMQQFSRSQTV.

An N-terminal signal peptide occupies residues 1–20; sequence MEWNTFFLVILIIIIKSTTP. Residues 21 to 461 lie on the Virion surface side of the membrane; it reads QITQRPPVEN…IPSDWSFNWS (441 aa). 5 N-linked (GlcNAc...) asparagine; by host glycosylation sites follow: Asn30, Asn378, Asn389, Asn438, and Asn459. A helical transmembrane segment spans residues 462–482; sequence LWPSLSGMGVVGGAFLLLVLC. Over 483–507 the chain is Intravirion; sequence CCCKASPPIPNYGIPMQQFSRSQTV.

It belongs to the novirhabdovirus glycoprotein family.

The protein resides in the virion membrane. In terms of biological role, this protein forms spikes on the surface of the virion. It is responsible both for the binding of the virus to susceptible host cells and for inducing the uptake of the virus by the cell. The interaction between the internal components of the virion and the portion of the glycoprotein exposed on the cytoplasmic face of the plasma membrane probably directs envelopment and virus budding. The chain is Spike glycoprotein (G) from Coregonus lavaretus (Common whitefish).